The following is a 163-amino-acid chain: UPF0763 protein CJJ81176_1011 (163 aa).

The protein belongs to the UPF0763 family.

The sequence is that of UPF0763 protein CJJ81176_1011 from Campylobacter jejuni subsp. jejuni serotype O:23/36 (strain 81-176).